A 356-amino-acid polypeptide reads, in one-letter code: Histidinol-phosphate aminotransferase 2 (356 aa).

At lysine 213 the chain carries N6-(pyridoxal phosphate)lysine.

The protein belongs to the class-II pyridoxal-phosphate-dependent aminotransferase family. Histidinol-phosphate aminotransferase subfamily. As to quaternary structure, homodimer. Pyridoxal 5'-phosphate serves as cofactor.

It carries out the reaction L-histidinol phosphate + 2-oxoglutarate = 3-(imidazol-4-yl)-2-oxopropyl phosphate + L-glutamate. It participates in amino-acid biosynthesis; L-histidine biosynthesis; L-histidine from 5-phospho-alpha-D-ribose 1-diphosphate: step 7/9. In Burkholderia mallei (strain ATCC 23344), this protein is Histidinol-phosphate aminotransferase 2.